The following is a 1342-amino-acid chain: DNA-directed RNA polymerase subunit beta (1342 aa).

Belongs to the RNA polymerase beta chain family. The RNAP catalytic core consists of 2 alpha, 1 beta, 1 beta' and 1 omega subunit. When a sigma factor is associated with the core the holoenzyme is formed, which can initiate transcription.

It carries out the reaction RNA(n) + a ribonucleoside 5'-triphosphate = RNA(n+1) + diphosphate. In terms of biological role, DNA-dependent RNA polymerase catalyzes the transcription of DNA into RNA using the four ribonucleoside triphosphates as substrates. The sequence is that of DNA-directed RNA polymerase subunit beta from Photorhabdus laumondii subsp. laumondii (strain DSM 15139 / CIP 105565 / TT01) (Photorhabdus luminescens subsp. laumondii).